The sequence spans 350 residues: ADP-ribose pyrophosphatase, mitochondrial (350 aa).

The N-terminal 46 residues, 1-46, are a transit peptide targeting the mitochondrion; the sequence is MAGRSLGKAVATVSLSVALASVTVRSSGCRAIPAPRNPFPSCGFHL. Disordered regions lie at residues 53–77 and 116–153; these read GSNG…KVER and SESS…PAGR. The residue at position 121 (S121) is a Phosphoserine. Over residues 124-135 the composition is skewed to basic and acidic residues; sequence FNEKDGHVERKS. In terms of domain architecture, Nudix hydrolase spans 178 to 334; sequence WKRDESGNKI…SQFIKLVAEK (157 aa). The Nudix box signature appears at 215–237; sequence GMVDPGEKISATLKREFGEEALN.

Belongs to the Nudix hydrolase family. NudF subfamily. In terms of assembly, monomer. Interacts with GLOD4. The cofactor is Mg(2+). Mn(2+) serves as cofactor.

It is found in the mitochondrion. The catalysed reaction is ADP-D-ribose + H2O = D-ribose 5-phosphate + AMP + 2 H(+). Hydrolyzes ADP-ribose (ADPR) to AMP and ribose 5'-phosphate. This is ADP-ribose pyrophosphatase, mitochondrial (Nudt9) from Rattus norvegicus (Rat).